A 396-amino-acid polypeptide reads, in one-letter code: Elongation factor Tu (396 aa).

The 197-residue stretch at 10 to 206 folds into the tr-type G domain; that stretch reads KPHVNIGTIG…AVDESVPDPV (197 aa). Residues 19–26 are G1; the sequence is GHVDHGKT. A GTP-binding site is contributed by 19–26; it reads GHVDHGKT. Position 26 (Thr26) interacts with Mg(2+). The interval 62–66 is G2; sequence GITIN. Residues 83-86 form a G3 region; sequence DAPG. GTP contacts are provided by residues 83 to 87 and 138 to 141; these read DAPGH and NKSD. The G4 stretch occupies residues 138-141; the sequence is NKSD. The G5 stretch occupies residues 176–178; that stretch reads SGL.

This sequence belongs to the TRAFAC class translation factor GTPase superfamily. Classic translation factor GTPase family. EF-Tu/EF-1A subfamily. Monomer.

The protein resides in the cytoplasm. The catalysed reaction is GTP + H2O = GDP + phosphate + H(+). In terms of biological role, GTP hydrolase that promotes the GTP-dependent binding of aminoacyl-tRNA to the A-site of ribosomes during protein biosynthesis. This chain is Elongation factor Tu, found in Pseudarthrobacter chlorophenolicus (strain ATCC 700700 / DSM 12829 / CIP 107037 / JCM 12360 / KCTC 9906 / NCIMB 13794 / A6) (Arthrobacter chlorophenolicus).